Consider the following 277-residue polypeptide: Phosphatidylglycerol--prolipoprotein diacylglyceryl transferase (277 aa).

Transmembrane regions (helical) follow at residues 18–38, 51–71, 89–109, and 116–136; these read ISVK…LLLA, IIVD…RIYY, IWHG…TAII, and ISFW…QAIG. R137 is a binding site for a 1,2-diacyl-sn-glycero-3-phospho-(1'-sn-glycerol). Helical transmembrane passes span 177–197, 205–225, and 235–255; these read QPTF…LLII, GELF…IEGM, and FRVS…IIIY.

This sequence belongs to the Lgt family.

The protein localises to the cell membrane. It catalyses the reaction L-cysteinyl-[prolipoprotein] + a 1,2-diacyl-sn-glycero-3-phospho-(1'-sn-glycerol) = an S-1,2-diacyl-sn-glyceryl-L-cysteinyl-[prolipoprotein] + sn-glycerol 1-phosphate + H(+). It functions in the pathway protein modification; lipoprotein biosynthesis (diacylglyceryl transfer). Catalyzes the transfer of the diacylglyceryl group from phosphatidylglycerol to the sulfhydryl group of the N-terminal cysteine of a prolipoprotein, the first step in the formation of mature lipoproteins. The sequence is that of Phosphatidylglycerol--prolipoprotein diacylglyceryl transferase from Listeria monocytogenes serotype 4b (strain CLIP80459).